The following is a 244-amino-acid chain: Probable transcriptional regulatory protein TT_C0469 (244 aa).

The protein belongs to the TACO1 family.

Its subcellular location is the cytoplasm. The sequence is that of Probable transcriptional regulatory protein TT_C0469 from Thermus thermophilus (strain ATCC BAA-163 / DSM 7039 / HB27).